The chain runs to 200 residues: Putative NAD(P)H nitroreductase Spy0809 (200 aa).

FMN is required as a cofactor.

This is Putative NAD(P)H nitroreductase Spy0809 from Streptococcus pyogenes serotype M6 (strain ATCC BAA-946 / MGAS10394).